A 112-amino-acid polypeptide reads, in one-letter code: Putative pterin-4-alpha-carbinolamine dehydratase (112 aa).

The protein belongs to the pterin-4-alpha-carbinolamine dehydratase family.

The catalysed reaction is (4aS,6R)-4a-hydroxy-L-erythro-5,6,7,8-tetrahydrobiopterin = (6R)-L-erythro-6,7-dihydrobiopterin + H2O. This is Putative pterin-4-alpha-carbinolamine dehydratase from Shewanella denitrificans (strain OS217 / ATCC BAA-1090 / DSM 15013).